Consider the following 84-residue polypeptide: NADH dehydrogenase [ubiquinone] 1 alpha subcomplex subunit 3 (84 aa).

The residue at position 2 (Ala2) is an N-acetylalanine. Residues 19–39 form a helical membrane-spanning segment; sequence LVVSFSVWGLAIIMPMISPYT. Residues 59–84 form a disordered region; that stretch reads DDGNMPDVPSHPQDPLGPSLDWLKNL.

Belongs to the complex I NDUFA3 subunit family. In terms of assembly, complex I is composed of 45 different subunits.

The protein localises to the mitochondrion inner membrane. Functionally, accessory subunit of the mitochondrial membrane respiratory chain NADH dehydrogenase (Complex I), that is believed not to be involved in catalysis. Complex I functions in the transfer of electrons from NADH to the respiratory chain. The immediate electron acceptor for the enzyme is believed to be ubiquinone. In Mus musculus (Mouse), this protein is NADH dehydrogenase [ubiquinone] 1 alpha subcomplex subunit 3 (Ndufa3).